Consider the following 482-residue polypeptide: tRNA sulfurtransferase (482 aa).

One can recognise a THUMP domain in the interval 61 to 165 (LAIRDALTRI…DDRLLLIKGR (105 aa)). Residues 183–184 (LI), Lys265, Gly287, and Gln296 contribute to the ATP site. Cys344 and Cys456 are oxidised to a cystine. Residues 404–482 (FGPNDVILDI…GFNNVKVYRP (79 aa)) enclose the Rhodanese domain. Cys456 (cysteine persulfide intermediate) is an active-site residue.

This sequence belongs to the ThiI family.

It localises to the cytoplasm. The enzyme catalyses [ThiI sulfur-carrier protein]-S-sulfanyl-L-cysteine + a uridine in tRNA + 2 reduced [2Fe-2S]-[ferredoxin] + ATP + H(+) = [ThiI sulfur-carrier protein]-L-cysteine + a 4-thiouridine in tRNA + 2 oxidized [2Fe-2S]-[ferredoxin] + AMP + diphosphate. It carries out the reaction [ThiS sulfur-carrier protein]-C-terminal Gly-Gly-AMP + S-sulfanyl-L-cysteinyl-[cysteine desulfurase] + AH2 = [ThiS sulfur-carrier protein]-C-terminal-Gly-aminoethanethioate + L-cysteinyl-[cysteine desulfurase] + A + AMP + 2 H(+). Its pathway is cofactor biosynthesis; thiamine diphosphate biosynthesis. Functionally, catalyzes the ATP-dependent transfer of a sulfur to tRNA to produce 4-thiouridine in position 8 of tRNAs, which functions as a near-UV photosensor. Also catalyzes the transfer of sulfur to the sulfur carrier protein ThiS, forming ThiS-thiocarboxylate. This is a step in the synthesis of thiazole, in the thiamine biosynthesis pathway. The sulfur is donated as persulfide by IscS. This is tRNA sulfurtransferase from Shigella boydii serotype 4 (strain Sb227).